A 171-amino-acid chain; its full sequence is MEFPDLGKHCSEPTCKQLDFLPITCDACKQDFCKDHFSYVGHKCPFAFKKDVQVPVCPLCNAPIPVKRGEIPDVVVGEHMDRDCTFHPGRNRNKVFTHRCSKEGCRKKEMLQLACAQCHGNFCIQHRHPLDHNCQAGSSSASRGRTSTSRAAEQKPSGVSWLAQRLRRTVK.

AN1-type zinc fingers lie at residues 4 to 52 (PDLG…KKDV) and 94 to 142 (KVFT…SSAS). Zn(2+) contacts are provided by Cys10, Cys15, Cys25, Cys28, Cys33, His36, His42, Cys44, Cys100, Cys105, Cys115, Cys118, Cys123, His126, His132, and Cys134. The tract at residues 134-171 (CQAGSSSASRGRTSTSRAAEQKPSGVSWLAQRLRRTVK) is disordered. Positions 136 to 151 (AGSSSASRGRTSTSRA) are enriched in low complexity.

The protein localises to the cytoplasm. It localises to the nucleus. The polypeptide is AN1-type zinc finger protein 2A (Zfand2a) (Mus musculus (Mouse)).